Consider the following 175-residue polypeptide: ATP synthase subunit delta (175 aa).

This sequence belongs to the ATPase delta chain family. As to quaternary structure, F-type ATPases have 2 components, F(1) - the catalytic core - and F(0) - the membrane proton channel. F(1) has five subunits: alpha(3), beta(3), gamma(1), delta(1), epsilon(1). F(0) has three main subunits: a(1), b(2) and c(10-14). The alpha and beta chains form an alternating ring which encloses part of the gamma chain. F(1) is attached to F(0) by a central stalk formed by the gamma and epsilon chains, while a peripheral stalk is formed by the delta and b chains.

The protein resides in the cell membrane. Its function is as follows. F(1)F(0) ATP synthase produces ATP from ADP in the presence of a proton or sodium gradient. F-type ATPases consist of two structural domains, F(1) containing the extramembraneous catalytic core and F(0) containing the membrane proton channel, linked together by a central stalk and a peripheral stalk. During catalysis, ATP synthesis in the catalytic domain of F(1) is coupled via a rotary mechanism of the central stalk subunits to proton translocation. This protein is part of the stalk that links CF(0) to CF(1). It either transmits conformational changes from CF(0) to CF(1) or is implicated in proton conduction. The protein is ATP synthase subunit delta of Ruminiclostridium cellulolyticum (strain ATCC 35319 / DSM 5812 / JCM 6584 / H10) (Clostridium cellulolyticum).